Reading from the N-terminus, the 150-residue chain is 1,4-dihydroxy-2-naphthoyl-CoA hydrolase (150 aa).

Residue D19 is part of the active site.

It belongs to the 4-hydroxybenzoyl-CoA thioesterase family. DHNA-CoA hydrolase subfamily.

It carries out the reaction 1,4-dihydroxy-2-naphthoyl-CoA + H2O = 1,4-dihydroxy-2-naphthoate + CoA + H(+). Its pathway is cofactor biosynthesis; phylloquinone biosynthesis. It functions in the pathway quinol/quinone metabolism; 1,4-dihydroxy-2-naphthoate biosynthesis; 1,4-dihydroxy-2-naphthoate from chorismate: step 7/7. Its function is as follows. Catalyzes the hydrolysis of 1,4-dihydroxy-2-naphthoyl-CoA (DHNA-CoA) to 1,4-dihydroxy-2-naphthoate (DHNA), a reaction involved in phylloquinone (vitamin K1) biosynthesis. This chain is 1,4-dihydroxy-2-naphthoyl-CoA hydrolase, found in Prochlorococcus marinus (strain MIT 9515).